The sequence spans 666 residues: Nuclear distribution protein nudE homolog 1 (666 aa).

Residues 14 to 195 (EEEIAHYREK…KDQLARAIAT (182 aa)) adopt a coiled-coil conformation. 4 disordered regions span residues 40–64 (EFQQ…KQQA), 220–310 (DDIN…SGIP), 369–388 (KRVT…PAPH), and 397–666 (DHNT…KVKK). The span at 251–274 (RSGTMSSIPVASPSTKRFSQQIPH) shows a compositional bias: polar residues. 2 stretches are compositionally biased toward low complexity: residues 275–287 (SPSF…STTS) and 372–383 (TSTTSTTSSTTT). Residues 400–410 (TTPTAQSQQFP) are compositionally biased toward polar residues. Composition is skewed to low complexity over residues 449–465 (PTFR…LPSR), 473–485 (ASGS…SGTA), and 536–554 (SATP…STSN). 2 stretches are compositionally biased toward polar residues: residues 587 to 599 (RQSL…TPTT) and 614 to 638 (SSLS…SGRP).

Belongs to the nudE family. As to quaternary structure, self-associates. Interacts with PAC1.

It localises to the cytoplasm. The protein localises to the cytoskeleton. Functionally, required for nuclear migration. This chain is Nuclear distribution protein nudE homolog 1 (NDE1), found in Cryptococcus neoformans var. neoformans serotype D (strain JEC21 / ATCC MYA-565) (Filobasidiella neoformans).